The following is a 157-amino-acid chain: Peptide methionine sulfoxide reductase MsrA (157 aa).

Cys10 is an active-site residue.

It belongs to the MsrA Met sulfoxide reductase family.

The catalysed reaction is L-methionyl-[protein] + [thioredoxin]-disulfide + H2O = L-methionyl-(S)-S-oxide-[protein] + [thioredoxin]-dithiol. The enzyme catalyses [thioredoxin]-disulfide + L-methionine + H2O = L-methionine (S)-S-oxide + [thioredoxin]-dithiol. Has an important function as a repair enzyme for proteins that have been inactivated by oxidation. Catalyzes the reversible oxidation-reduction of methionine sulfoxide in proteins to methionine. This is Peptide methionine sulfoxide reductase MsrA from Clostridium botulinum (strain Okra / Type B1).